The sequence spans 348 residues: Holliday junction branch migration complex subunit RuvB (348 aa).

The large ATPase domain (RuvB-L) stretch occupies residues 1–183; the sequence is MTEASRIVAP…FGIPVRLNFY (183 aa). ATP contacts are provided by residues leucine 22, arginine 23, glycine 64, lysine 67, threonine 68, threonine 69, 130–132, arginine 173, tyrosine 183, and arginine 220; that span reads EDF. Residue threonine 68 participates in Mg(2+) binding. The small ATPAse domain (RuvB-S) stretch occupies residues 184-254; the sequence is TEDELEKIVS…VADHALGALE (71 aa). Residues 257-348 form a head domain (RuvB-H) region; sequence AAGLDAMDRR…SGLFGQDEDR (92 aa). The DNA site is built by arginine 293, arginine 312, and arginine 317. Positions 329-348 are disordered; that stretch reads LTEPSRDPAQSGLFGQDEDR.

This sequence belongs to the RuvB family. Homohexamer. Forms an RuvA(8)-RuvB(12)-Holliday junction (HJ) complex. HJ DNA is sandwiched between 2 RuvA tetramers; dsDNA enters through RuvA and exits via RuvB. An RuvB hexamer assembles on each DNA strand where it exits the tetramer. Each RuvB hexamer is contacted by two RuvA subunits (via domain III) on 2 adjacent RuvB subunits; this complex drives branch migration. In the full resolvosome a probable DNA-RuvA(4)-RuvB(12)-RuvC(2) complex forms which resolves the HJ.

The protein resides in the cytoplasm. The enzyme catalyses ATP + H2O = ADP + phosphate + H(+). The RuvA-RuvB-RuvC complex processes Holliday junction (HJ) DNA during genetic recombination and DNA repair, while the RuvA-RuvB complex plays an important role in the rescue of blocked DNA replication forks via replication fork reversal (RFR). RuvA specifically binds to HJ cruciform DNA, conferring on it an open structure. The RuvB hexamer acts as an ATP-dependent pump, pulling dsDNA into and through the RuvAB complex. RuvB forms 2 homohexamers on either side of HJ DNA bound by 1 or 2 RuvA tetramers; 4 subunits per hexamer contact DNA at a time. Coordinated motions by a converter formed by DNA-disengaged RuvB subunits stimulates ATP hydrolysis and nucleotide exchange. Immobilization of the converter enables RuvB to convert the ATP-contained energy into a lever motion, pulling 2 nucleotides of DNA out of the RuvA tetramer per ATP hydrolyzed, thus driving DNA branch migration. The RuvB motors rotate together with the DNA substrate, which together with the progressing nucleotide cycle form the mechanistic basis for DNA recombination by continuous HJ branch migration. Branch migration allows RuvC to scan DNA until it finds its consensus sequence, where it cleaves and resolves cruciform DNA. The sequence is that of Holliday junction branch migration complex subunit RuvB from Nitrobacter winogradskyi (strain ATCC 25391 / DSM 10237 / CIP 104748 / NCIMB 11846 / Nb-255).